A 452-amino-acid polypeptide reads, in one-letter code: MTSRTSLTIVLAAGEGTRMRSSLPKVLHQVAGETLLAHVLKAAPEGDGAALAVVIGPDHQAVAEEVGRVRPQATTYVQRERLGTAHAVLAAREAIAAGADDLLVAFGDTPLISAATFARLRQPLAQGVALVALGFRPADPTGYGRLLVQNDRLVGIREQADASADERAIGLCNAGVMAIDGKAALRILERIGSANAKGEYYLTDAVAIARELGLEAAVIETSEDEVRGINTKAQLAEAEAVMQARLRQAALDAGVTMIAPETVFLAADTTFGKDVTIEPFVVIGAGVSIGDGAVIHAFSHLVQAKIGKNASVGPYARLRPGTSLGDGAKIGNFVETKAAQIDPGAKVNHLTYIGDAHIGPNANIGAGTITCNYDGFGKHKTEIGAGAFVGSNSSLVAPLKIGAGAYVGSGSVVTRDVPDDALAVERNQQKVSEGWAKRFREAKTRGKTRPAK.

The segment at 1 to 232 is pyrophosphorylase; sequence MTSRTSLTIV…EDEVRGINTK (232 aa). UDP-N-acetyl-alpha-D-glucosamine-binding positions include 11 to 14, Lys-25, Gln-78, and 83 to 84; these read LAAG and GT. Asp-108 lines the Mg(2+) pocket. The UDP-N-acetyl-alpha-D-glucosamine site is built by Gly-144, Glu-158, Asn-173, and Asn-230. Asn-230 contacts Mg(2+). Positions 233–253 are linker; the sequence is AQLAEAEAVMQARLRQAALDA. Residues 254–452 form an N-acetyltransferase region; it reads GVTMIAPETV…KTRGKTRPAK (199 aa). Residues Arg-319 and Lys-337 each contribute to the UDP-N-acetyl-alpha-D-glucosamine site. The active-site Proton acceptor is His-349. Positions 352 and 363 each coordinate UDP-N-acetyl-alpha-D-glucosamine. Residues Ala-366, 372 to 373, Ser-391, Ser-409, and Arg-426 each bind acetyl-CoA; that span reads NY.

It in the N-terminal section; belongs to the N-acetylglucosamine-1-phosphate uridyltransferase family. In the C-terminal section; belongs to the transferase hexapeptide repeat family. Homotrimer. It depends on Mg(2+) as a cofactor.

The protein resides in the cytoplasm. The catalysed reaction is alpha-D-glucosamine 1-phosphate + acetyl-CoA = N-acetyl-alpha-D-glucosamine 1-phosphate + CoA + H(+). It carries out the reaction N-acetyl-alpha-D-glucosamine 1-phosphate + UTP + H(+) = UDP-N-acetyl-alpha-D-glucosamine + diphosphate. It participates in nucleotide-sugar biosynthesis; UDP-N-acetyl-alpha-D-glucosamine biosynthesis; N-acetyl-alpha-D-glucosamine 1-phosphate from alpha-D-glucosamine 6-phosphate (route II): step 2/2. Its pathway is nucleotide-sugar biosynthesis; UDP-N-acetyl-alpha-D-glucosamine biosynthesis; UDP-N-acetyl-alpha-D-glucosamine from N-acetyl-alpha-D-glucosamine 1-phosphate: step 1/1. The protein operates within bacterial outer membrane biogenesis; LPS lipid A biosynthesis. In terms of biological role, catalyzes the last two sequential reactions in the de novo biosynthetic pathway for UDP-N-acetylglucosamine (UDP-GlcNAc). The C-terminal domain catalyzes the transfer of acetyl group from acetyl coenzyme A to glucosamine-1-phosphate (GlcN-1-P) to produce N-acetylglucosamine-1-phosphate (GlcNAc-1-P), which is converted into UDP-GlcNAc by the transfer of uridine 5-monophosphate (from uridine 5-triphosphate), a reaction catalyzed by the N-terminal domain. In Rhodopseudomonas palustris (strain BisA53), this protein is Bifunctional protein GlmU.